The chain runs to 181 residues: UPF0340 protein OB2986 (181 aa).

Belongs to the UPF0340 family.

This chain is UPF0340 protein OB2986, found in Oceanobacillus iheyensis (strain DSM 14371 / CIP 107618 / JCM 11309 / KCTC 3954 / HTE831).